A 1486-amino-acid chain; its full sequence is Chromosome partition protein MukB (1486 aa).

ATP is bound at residue 34–41 (GGNGAGKS). Coiled coils occupy residues 326–418 (LEAD…QYNQ), 444–480 (LETF…QAYQ), and 509–603 (RHLA…RAPV). The segment at 666–783 (PGGSEDQRLN…EVPLFGRAAR (118 aa)) is flexible hinge. Coiled coils occupy residues 835–923 (EAEI…AKLE), 977–1115 (EMLS…TAKA), and 1209–1266 (VEAI…QNVS).

Belongs to the SMC family. MukB subfamily. In terms of assembly, homodimerization via its hinge domain. Binds to DNA via its C-terminal region. Interacts, and probably forms a ternary complex, with MukE and MukF via its C-terminal region. The complex formation is stimulated by calcium or magnesium. Interacts with tubulin-related protein FtsZ.

The protein resides in the cytoplasm. The protein localises to the nucleoid. Functionally, plays a central role in chromosome condensation, segregation and cell cycle progression. Functions as a homodimer, which is essential for chromosome partition. Involved in negative DNA supercoiling in vivo, and by this means organize and compact chromosomes. May achieve or facilitate chromosome segregation by condensation DNA from both sides of a centrally located replisome during cell division. The chain is Chromosome partition protein MukB from Shigella flexneri serotype 5b (strain 8401).